Here is a 376-residue protein sequence, read N- to C-terminus: MEENSIKIHKWLYPASWLYGAGVALRNKLFDWGKLQSKSFNVPIICIGNIAVGGTGKTPHTEYLIKLLHDEFQVAVLSRGYKRHTKGFILSTAESDARSIGDEPYQIQSKFSDIRVAVDEDRCHGIERLLTLKEPPVEVILLDDAFQHRYVKAGLNILLTDYHRLFCDDTLMPAGRLREPAQGKNRAQIVIVTKCPPDIKPIDYNIITKRLNLFPYQQLYFSSFRYGNLRAVFPDCATVQERKLSSLQTEEQILLITGIASPDTIIRELEIHTRNIDLLAFSDHHNFSQRDLAQIKERFGKLRKGQRLIVTTEKDATRLICHQELDEGLKPFIYALPIEVEILQNQQDNFNQHIIGYVRENTRNGSLPERKDAHKS.

51 to 58 (AVGGTGKT) is an ATP binding site.

The protein belongs to the LpxK family.

The catalysed reaction is a lipid A disaccharide + ATP = a lipid IVA + ADP + H(+). It participates in glycolipid biosynthesis; lipid IV(A) biosynthesis; lipid IV(A) from (3R)-3-hydroxytetradecanoyl-[acyl-carrier-protein] and UDP-N-acetyl-alpha-D-glucosamine: step 6/6. Functionally, transfers the gamma-phosphate of ATP to the 4'-position of a tetraacyldisaccharide 1-phosphate intermediate (termed DS-1-P) to form tetraacyldisaccharide 1,4'-bis-phosphate (lipid IVA). This is Tetraacyldisaccharide 4'-kinase from Bacteroides fragilis (strain ATCC 25285 / DSM 2151 / CCUG 4856 / JCM 11019 / LMG 10263 / NCTC 9343 / Onslow / VPI 2553 / EN-2).